We begin with the raw amino-acid sequence, 372 residues long: tRNA-specific 2-thiouridylase MnmA (372 aa).

Residues 11–18 and Met36 contribute to the ATP site; that span reads GLSGGVDS. Residues 106 to 108 form an interaction with target base in tRNA region; that stretch reads NPD. Cys111 functions as the Nucleophile in the catalytic mechanism. Cys111 and Cys204 are joined by a disulfide. Residue Gly136 participates in ATP binding. Residues 154 to 156 form an interaction with tRNA region; the sequence is KDQ. Cys204 acts as the Cysteine persulfide intermediate in catalysis. The segment at 311–312 is interaction with tRNA; that stretch reads RY.

Belongs to the MnmA/TRMU family.

Its subcellular location is the cytoplasm. The catalysed reaction is S-sulfanyl-L-cysteinyl-[protein] + uridine(34) in tRNA + AH2 + ATP = 2-thiouridine(34) in tRNA + L-cysteinyl-[protein] + A + AMP + diphosphate + H(+). Its function is as follows. Catalyzes the 2-thiolation of uridine at the wobble position (U34) of tRNA, leading to the formation of s(2)U34. The protein is tRNA-specific 2-thiouridylase MnmA of Mycoplasmopsis synoviae (strain 53) (Mycoplasma synoviae).